The primary structure comprises 718 residues: SANT and BTB domain regulator of class switch recombination (718 aa).

An SANT domain is found at 21–59; sequence DMILYPLIGIPQTINWETIARLVPGLTPKECAKRFDELK. Residues 118–134 are compositionally biased toward polar residues; sequence ASTRNCSSESENCTTHN. The interval 118–142 is disordered; that stretch reads ASTRNCSSESENCTTHNGGEMTEES. A BTB domain is found at 147–255; it reads MVIHVCDEAK…QCIQYCHKNM (109 aa). Residues 555–576 are compositionally biased toward acidic residues; sequence SEEEEYTTGSEVTEDEVGDEEE. Disordered regions lie at residues 555 to 622 and 692 to 718; these read SEEE…SPFV and SVPV…GRPA. Positions 580–595 are enriched in basic residues; it reads KQRKKEKPKKFTRQPK. Residues 604-615 show a composition bias toward basic and acidic residues; that stretch reads QRKEKALEKSAS.

The protein belongs to the KIAA1841 family. In terms of assembly, homodimer. Interacts (via the BTB domain) with HDAC1 and NCOR2.

Its function is as follows. Negatively regulates class switch recombination or isotype switching in splenic B-cells. The protein is SANT and BTB domain regulator of class switch recombination of Homo sapiens (Human).